We begin with the raw amino-acid sequence, 183 residues long: Apo-citrate lyase phosphoribosyl-dephospho-CoA transferase (183 aa).

The protein belongs to the CitX family.

The catalysed reaction is apo-[citrate lyase ACP] + 2'-(5''-triphospho-alpha-D-ribosyl)-3'-dephospho-CoA = holo-[citrate lyase ACP] + diphosphate. Functionally, transfers 2-(5''-triphosphoribosyl)-3'-dephosphocoenzyme-A on a serine residue to the apo-acyl carrier protein (gamma chain) of the citrate lyase to yield holo-acyl carrier protein. The polypeptide is Apo-citrate lyase phosphoribosyl-dephospho-CoA transferase (Shigella flexneri serotype 5b (strain 8401)).